A 152-amino-acid polypeptide reads, in one-letter code: Large ribosomal subunit protein uL13 (152 aa).

A disordered region spans residues 130–152 (HPHEAQSPEVLDLASKNPKNTRS).

Belongs to the universal ribosomal protein uL13 family. As to quaternary structure, part of the 50S ribosomal subunit.

Functionally, this protein is one of the early assembly proteins of the 50S ribosomal subunit, although it is not seen to bind rRNA by itself. It is important during the early stages of 50S assembly. The chain is Large ribosomal subunit protein uL13 from Dinoroseobacter shibae (strain DSM 16493 / NCIMB 14021 / DFL 12).